Consider the following 359-residue polypeptide: MNTNNNFSNGEEVSIHIGTGIDIAAKAWGPKESSQKMLALHGWLDNANTFDFIAPILAEKGIRIIAIDFIGHGLSPHKPSWCNLYYTDYITQVLDVAEALQWKTFSIMGHSMGAGIASIVAASMPHLVERIICLDFIGILSKEQDQIKAIQFAMQTRTTINNRKPHLYNNKQAIFDKLKANNPWIKDEAGQRLLDRSIESVISPTTGEQCYKLRHDPRLVGPSIFIMREAEVLLMLDEIQCPVLLIWGTTSSQQFQIKKNWTQIMEGRMSHIKNLKQLVVPGSHHFHMENTSAFSQDILEFMFEEKDLSFTPSSTTQQQQQQQQSAENKKGDNHNQIAEQDLSTSNTSSPIISKPKPNL.

Residues 38–289 (LALHGWLDNA…VPGSHHFHME (252 aa)) enclose the AB hydrolase-1 domain. Residue Ser111 is part of the active site. Positions 310–359 (FTPSSTTQQQQQQQQSAENKKGDNHNQIAEQDLSTSNTSSPIISKPKPNL) are disordered. The segment covering 334–351 (HNQIAEQDLSTSNTSSPI) has biased composition (polar residues).

It belongs to the AB hydrolase superfamily.

Functionally, probable serine hydrolase. The chain is Serine hydrolase-like protein DDB_G0286239 from Dictyostelium discoideum (Social amoeba).